Reading from the N-terminus, the 308-residue chain is Hydroxyacylglutathione hydrolase, mitochondrial (308 aa).

Residues 1 to 13 constitute a mitochondrion transit peptide; sequence MVLGRGLLGRRSL. His-102, His-104, Asp-106, and His-107 together coordinate Zn(2+). An N6-acetyllysine modification is found at Lys-116. His-158 and Asp-182 together coordinate Zn(2+). Substrate contacts are provided by residues 191–193 and 221–223; these read KFY and HEY. Position 221 (His-221) interacts with Zn(2+). Lys-229 carries the post-translational modification N6-acetyllysine; alternate. N6-succinyllysine; alternate is present on Lys-229. Residue 297 to 300 coordinates substrate; the sequence is RKEK.

The protein belongs to the metallo-beta-lactamase superfamily. Glyoxalase II family. As to quaternary structure, monomer. Requires Zn(2+) as cofactor. In terms of tissue distribution, testis.

It localises to the mitochondrion matrix. The protein localises to the cytoplasm. The catalysed reaction is an S-(2-hydroxyacyl)glutathione + H2O = a 2-hydroxy carboxylate + glutathione + H(+). It carries out the reaction (R)-S-lactoylglutathione + H2O = (R)-lactate + glutathione + H(+). It functions in the pathway secondary metabolite metabolism; methylglyoxal degradation; (R)-lactate from methylglyoxal: step 2/2. Thiolesterase that catalyzes the hydrolysis of S-D-lactoyl-glutathione to form glutathione and D-lactic acid. This chain is Hydroxyacylglutathione hydrolase, mitochondrial (HAGH), found in Macaca fascicularis (Crab-eating macaque).